The primary structure comprises 122 residues: T cell receptor gamma variable 9 (122 aa).

The signal sequence occupies residues 1-20 (MLSLLHTSTLAVLGALCVYG). One can recognise an Ig-like domain in the interval 27 to 122 (PQISSTKTLS…ATYYCALWEV (96 aa)). Cysteines 43 and 117 form a disulfide.

As to quaternary structure, gamma-delta TR is a heterodimer composed of a gamma and delta chain; disulfide-linked. The gamma-delta TR is associated with the transmembrane signaling CD3 coreceptor proteins following the stoichiometry: a single gamma-delta TR heterodimer associates with one CD3D-CD3E heterodimer, one CD3G-CD3E heterodimer and one CD247 homodimer forming a stable octameric structure. Upon activation, gamma-delta TR complex associates with FCER1G to initiate intracellular signaling.

Its subcellular location is the cell membrane. V region of the variable domain of T cell receptor (TR) gamma chain that participates in the antigen recognition. Gamma-delta TRs recognize a variety of self and foreign non-peptide antigens frequently expressed at the epithelial boundaries between the host and external environment, including endogenous lipids presented by MH-like protein CD1D and phosphoantigens presented by butyrophilin-like molecule BTN3A1. Upon antigen recognition induces rapid, innate-like immune responses involved in pathogen clearance and tissue repair. Binding of gamma-delta TR complex to antigen triggers phosphorylation of immunoreceptor tyrosine-based activation motifs (ITAMs) in the CD3 chains by the LCK and FYN kinases, allowing the recruitment, phosphorylation, and activation of ZAP70 that facilitates phosphorylation of the scaffolding proteins LCP2 and LAT. This lead to the formation of a supramolecular signalosome that recruits the phospholipase PLCG1, resulting in calcium mobilization and ERK activation, ultimately leading to T cell expansion and differentiation into effector cells. Gamma-delta TRs are produced through somatic rearrangement of a limited repertoire of variable (V), diversity (D), and joining (J) genes. The potential diversity of gamma-delta TRs is conferred by the unique ability to rearrange (D) genes in tandem and to utilize all three reading frames. The combinatorial diversity is considerably increased by the sequence exonuclease trimming and random nucleotide (N) region additions which occur during the V-(D)-J rearrangements. The protein is T cell receptor gamma variable 9 of Homo sapiens (Human).